The sequence spans 37 residues: Cytochrome b6-f complex subunit 5 (37 aa).

The helical transmembrane segment at 5-25 (FLLGIILGLIPITLIGLFVTA) threads the bilayer.

Belongs to the PetG family. In terms of assembly, the 4 large subunits of the cytochrome b6-f complex are cytochrome b6, subunit IV (17 kDa polypeptide, PetD), cytochrome f and the Rieske protein, while the 4 small subunits are PetG, PetL, PetM and PetN. The complex functions as a dimer.

The protein localises to the plastid membrane. Component of the cytochrome b6-f complex, which mediates electron transfer between photosystem II (PSII) and photosystem I (PSI), cyclic electron flow around PSI, and state transitions. PetG is required for either the stability or assembly of the cytochrome b6-f complex. In Cuscuta obtusiflora (Peruvian dodder), this protein is Cytochrome b6-f complex subunit 5.